The primary structure comprises 210 residues: Uracil phosphoribosyltransferase (210 aa).

5-phospho-alpha-D-ribose 1-diphosphate is bound by residues Arg78, Arg103, and 130–138; that span reads DPMLATGGT. Uracil contacts are provided by residues Ile193 and 198-200; that span reads GDA. Asp199 is a binding site for 5-phospho-alpha-D-ribose 1-diphosphate.

This sequence belongs to the UPRTase family. It depends on Mg(2+) as a cofactor.

It carries out the reaction UMP + diphosphate = 5-phospho-alpha-D-ribose 1-diphosphate + uracil. It functions in the pathway pyrimidine metabolism; UMP biosynthesis via salvage pathway; UMP from uracil: step 1/1. With respect to regulation, allosterically activated by GTP. Functionally, catalyzes the conversion of uracil and 5-phospho-alpha-D-ribose 1-diphosphate (PRPP) to UMP and diphosphate. The polypeptide is Uracil phosphoribosyltransferase (Xanthomonas campestris pv. campestris (strain 8004)).